The chain runs to 285 residues: RNA 5'-monophosphate methyltransferase (285 aa).

Residues arginine 46, asparagine 77, aspartate 111, 136-137, and methionine 165 each bind S-adenosyl-L-methionine; that span reads DI. The Bin3-type SAM domain occupies 53–275; sequence ELLRQLFPPE…KHTHETQAIP (223 aa).

It belongs to the methyltransferase superfamily. In terms of assembly, interacts with DICER1; the interaction may be mediated by RNA.

It is found in the cytoplasm. It carries out the reaction a 5'-end 5'-phospho-ribonucleoside-RNA + S-adenosyl-L-methionine = a 5'-end (5'-methylphospho)-ribonucleoside-RNA + S-adenosyl-L-homocysteine. The catalysed reaction is a 5'-end 5'-phospho-ribonucleoside-RNA + 2 S-adenosyl-L-methionine = a 5'-end (5'-bismethylphospho)-ribonucleoside-RNA + 2 S-adenosyl-L-homocysteine. In terms of biological role, O-methyltransferase that specifically monomethylates 5'-monophosphate of cytoplasmic histidyl tRNA (tRNA(His)), acting as a capping enzyme by protecting tRNA(His) from cleavage by DICER1. Also able, with less efficiently, to methylate the 5' monophosphate of a subset of pre-miRNAs, acting as a negative regulator of miRNA processing. The 5' monophosphate of pre-miRNAs is recognized by DICER1 and is required for pre-miRNAs processing: methylation at this position reduces the processing of pre-miRNAs by DICER1. Was also reported to mediate dimethylation of pre-miR-145; however dimethylation cannot be reproduced by another group which observes a monomethylation of pre-miR-145. The chain is RNA 5'-monophosphate methyltransferase from Mus musculus (Mouse).